A 445-amino-acid polypeptide reads, in one-letter code: RING finger and transmembrane domain-containing protein 2 (445 aa).

Residues 1-183 are Extracellular-facing; the sequence is MWLLAAHQVL…LLAKLCFQHK (183 aa). The tract at residues 12–41 is disordered; it reads KMQRRHSSNTDNIPPERSRSQALSPEASVD. The helical transmembrane segment at 184–203 threads the bilayer; that stretch reads LGIAVCIGMASTFAYANSTL. The Cytoplasmic segment spans residues 204-215; it reads REQVSLKEKRSV. Residues 216-236 form a helical membrane-spanning segment; it reads LVILWILAFLAGNTMYVLYTF. The Extracellular portion of the chain corresponds to 237-256; it reads SSQQLYSSLIFLKPNLETLD. A helical membrane pass occupies residues 257-277; sequence FFDLLWIVGIADFVLKYITIA. Over 278–330 the chain is Cytoplasmic; it reads LKCLIVALPKIILAVKSKGKFYLVIEELSQLFRSLVPIQLWYKYIMGDDSSNS. The helical transmembrane segment at 331 to 351 threads the bilayer; sequence YFLGGVLIVLYSLCKSFDICG. Residues 352-445 lie on the Extracellular side of the membrane; that stretch reads RVGGLRKALK…GATSAHLQVY (94 aa). The segment at 385–423 adopts an RING-type zinc-finger fold; the sequence is CAICQAEFRDPMILLCQHVFCEECLCLWLDRERTCPLCR.

The protein localises to the membrane. Its function is as follows. E3 ubiquitin-protein ligase that negatively regulates IL3-dependent cellular responses through IL3RA ubiquitination and degradation by the proteasome, having an anti-inflammatory effect. The protein is RING finger and transmembrane domain-containing protein 2 (Rnft2) of Mus musculus (Mouse).